A 296-amino-acid polypeptide reads, in one-letter code: MMFKQYLQVTKPGIIFGNLISVIGGFLLASKGSIDYPLFIYTLVGVSLVVASGCVFNNFIDRDIDRKMERTKNRVLVKGLISPGVSLVYATLLGIAGFMLLWFGANPLACWLGVMGFVVYVGIYSLYMKRHSVYGTLIGSLSGAAPPVIGYCAVTGDFDSGAAILLAIFSLWQMPHSYAIAIFRLKDYQAANIPVLPVVKGISVAKNHITLYIIAFAVATLMLTLGGYAGYKYLVVAAAVSVWWLGMALRGYKVEDDKVWARKLFGFSIIAITALSIMMSVDFMVPNSQSLLTYVW.

The Cytoplasmic portion of the chain corresponds to 1–9 (MMFKQYLQV). Residues 10–28 (TKPGIIFGNLISVIGGFLL) form a helical membrane-spanning segment. Over 29–37 (ASKGSIDYP) the chain is Periplasmic. A helical transmembrane segment spans residues 38–56 (LFIYTLVGVSLVVASGCVF). At 57–78 (NNFIDRDIDRKMERTKNRVLVK) the chain is on the cytoplasmic side. A helical membrane pass occupies residues 79–97 (GLISPGVSLVYATLLGIAG). Over 98–107 (FMLLWFGANP) the chain is Periplasmic. The helical transmembrane segment at 108-126 (LACWLGVMGFVVYVGIYSL) threads the bilayer. The Cytoplasmic segment spans residues 127-197 (YMKRHSVYGT…YQAANIPVLP (71 aa)). The chain crosses the membrane as a helical span at residues 198-216 (VVKGISVAKNHITLYIIAF). Residues 217–228 (AVATLMLTLGGY) are Periplasmic-facing. The helical transmembrane segment at 229 to 247 (AGYKYLVVAAAVSVWWLGM) threads the bilayer. Residues 248 to 268 (ALRGYKVEDDKVWARKLFGFS) are Cytoplasmic-facing. Residues 269-287 (IIAITALSIMMSVDFMVPN) form a helical membrane-spanning segment. Topologically, residues 288-296 (SQSLLTYVW) are periplasmic.

It belongs to the UbiA prenyltransferase family. Protoheme IX farnesyltransferase subfamily.

It localises to the cell inner membrane. The enzyme catalyses heme b + (2E,6E)-farnesyl diphosphate + H2O = Fe(II)-heme o + diphosphate. The protein operates within porphyrin-containing compound metabolism; heme O biosynthesis; heme O from protoheme: step 1/1. Converts heme B (protoheme IX) to heme O by substitution of the vinyl group on carbon 2 of heme B porphyrin ring with a hydroxyethyl farnesyl side group. The polypeptide is Protoheme IX farnesyltransferase (Salmonella arizonae (strain ATCC BAA-731 / CDC346-86 / RSK2980)).